The sequence spans 303 residues: Small ribosomal subunit protein uS2 (303 aa).

Residues 258–303 form a disordered region; it reads ATLRENAVVTENEVKKTDEEEGASSEAARADAQNEEAVAKPGEEVE. Positions 294-303 are enriched in basic and acidic residues; it reads AVAKPGEEVE.

The protein belongs to the universal ribosomal protein uS2 family.

This chain is Small ribosomal subunit protein uS2, found in Bifidobacterium animalis subsp. lactis (strain AD011).